Consider the following 251-residue polypeptide: Imidazole glycerol phosphate synthase subunit HisF (251 aa).

Catalysis depends on residues Asp-11 and Asp-130.

Belongs to the HisA/HisF family. Heterodimer of HisH and HisF.

Its subcellular location is the cytoplasm. It carries out the reaction 5-[(5-phospho-1-deoxy-D-ribulos-1-ylimino)methylamino]-1-(5-phospho-beta-D-ribosyl)imidazole-4-carboxamide + L-glutamine = D-erythro-1-(imidazol-4-yl)glycerol 3-phosphate + 5-amino-1-(5-phospho-beta-D-ribosyl)imidazole-4-carboxamide + L-glutamate + H(+). The protein operates within amino-acid biosynthesis; L-histidine biosynthesis; L-histidine from 5-phospho-alpha-D-ribose 1-diphosphate: step 5/9. Its function is as follows. IGPS catalyzes the conversion of PRFAR and glutamine to IGP, AICAR and glutamate. The HisF subunit catalyzes the cyclization activity that produces IGP and AICAR from PRFAR using the ammonia provided by the HisH subunit. The sequence is that of Imidazole glycerol phosphate synthase subunit HisF from Bacteroides thetaiotaomicron (strain ATCC 29148 / DSM 2079 / JCM 5827 / CCUG 10774 / NCTC 10582 / VPI-5482 / E50).